The chain runs to 221 residues: Spore wall protein 3 (221 aa).

Residues 1 to 20 form the signal peptide; it reads MVRRSLYFLAVMGVVRSSSG. A disordered region spans residues 150 to 203; that stretch reads ENPASTGSSSTSTCPPKGTAGTTDNKGKAGGAAADDKSKSSSSSSSKKKKKGAK. The segment covering 154 to 173 has biased composition (low complexity); that stretch reads STGSSSTSTCPPKGTAGTTD. A lipid anchor (GPI-anchor amidated serine) is attached at Ser192. Positions 193–221 are cleaved as a propeptide — removed in mature form; the sequence is SSSKKKKKGAKSLVALGAVATTALFSIVM.

It localises to the spore wall. The protein localises to the membrane. It is found in the cytoplasm. In terms of biological role, spore wall component. The sequence is that of Spore wall protein 3 (SWP3) from Encephalitozoon cuniculi (strain GB-M1) (Microsporidian parasite).